Here is a 745-residue protein sequence, read N- to C-terminus: Meiotic driver SPOK3 (745 aa).

Residues 4–34 are a coiled coil; it reads KDRITQLLRELEEAKAREAQERCEKERLQLE. Disordered regions lie at residues 173 to 222 and 407 to 487; these read ELTQ…DGVG and LSSA…VDPQ. Basic and acidic residues predominate over residues 188-197; that stretch reads TSDRSLERRQ. Polar residues-rich tracts occupy residues 208-217 and 409-422; these read KSKYICSNRQ and SAPS…SEYT. Residues 214 to 325 form a required for antidote activity region; the sequence is SNRQPDGVGI…LLLYVDRDDW (112 aa). The span at 466–482 shows a compositional bias: basic and acidic residues; it reads AKRERGPSSGGKDDGRS. The interval 491–745 is required for poison activity; the sequence is QYCTQACLLG…SPMATPSHGG (255 aa).

Its subcellular location is the cytoplasm. It localises to the nucleus. Functionally, promotes unequal transmission of alleles from the parental zygote to progeny spores by acting as poison/antidote system, leading to poisoning of progeny that do not inherit the allele. May possess DNA nuclease activity that leads to spore killing, and a kinase activity that confers resistance to the nuclease activity. The chain is Meiotic driver SPOK3 from Podospora anserina (Pleurage anserina).